Reading from the N-terminus, the 96-residue chain is Small ribosomal subunit protein bS6 (96 aa).

Belongs to the bacterial ribosomal protein bS6 family.

Binds together with bS18 to 16S ribosomal RNA. This chain is Small ribosomal subunit protein bS6, found in Carboxydothermus hydrogenoformans (strain ATCC BAA-161 / DSM 6008 / Z-2901).